The chain runs to 296 residues: MILPILGGPTGSGKTSLTQVLDPKRFEIVSFDSRQVYRDLPVGTTAPTPEECSTIRHWLIGFLNANESINANQFSLLARNAIADIQSRGKIPFLLGGTGFYLRAFLLGMYPVPTVPKETKDYVFTLPLEEARSQLLAKDPKAMESLSDQDGYRIKRALEVVLTGVLWSDVSKETVGGFWKDNPEVKIVGHWLDWPREILYQRINTRVETIIRGMLEETKEVLSKYGPDCPGLRTLGYNFALAFLNGMIDSNTFIEQLAQSHRNYAKRQITWFKKESFLSPISYDAAVQLYTNIEQR.

Residue 8-15 (GPTGSGKT) coordinates ATP. 10-15 (TGSGKT) provides a ligand contact to substrate. The tract at residues 32–35 (DSRQ) is interaction with substrate tRNA.

The protein belongs to the IPP transferase family. In terms of assembly, monomer. It depends on Mg(2+) as a cofactor.

It carries out the reaction adenosine(37) in tRNA + dimethylallyl diphosphate = N(6)-dimethylallyladenosine(37) in tRNA + diphosphate. Catalyzes the transfer of a dimethylallyl group onto the adenine at position 37 in tRNAs that read codons beginning with uridine, leading to the formation of N6-(dimethylallyl)adenosine (i(6)A). This is tRNA dimethylallyltransferase from Leptospira biflexa serovar Patoc (strain Patoc 1 / Ames).